A 350-amino-acid polypeptide reads, in one-letter code: Variable large protein 4 (350 aa).

The N-terminal stretch at 1 to 18 (MRRRISAIIMTLFMVLVS) is a signal peptide. Cys-19 carries N-palmitoyl cysteine lipidation. Cys-19 is lipidated: S-diacylglycerol cysteine.

Belongs to the variable large protein (Vlp) family. Delta subfamily.

It localises to the cell outer membrane. Functionally, the Vlp and Vsp proteins are antigenically distinct proteins, only one vlp or vsp gene is transcriptionally active at any one time. Switching between these genes is a mechanism of host immune response evasion. This is Variable large protein 4 from Borrelia hermsii.